Here is a 2171-residue protein sequence, read N- to C-terminus: DExH-box ATP-dependent RNA helicase DExH12 (2171 aa).

Disordered stretches follow at residues Ser24–Asp80, Glu218–Thr267, and Thr383–Trp426. Basic and acidic residues-rich tracts occupy residues Asn31–Thr40 and Ile50–Asp80. The span at Glu218–Glu242 shows a compositional bias: acidic residues. Positions Thr383–Glu423 are enriched in basic and acidic residues. The Helicase ATP-binding 1 domain maps to Asp514–Leu697. Residue Ala527–Thr534 coordinates ATP. A DEIH box motif is present at residues Asp639 to His642. In terms of domain architecture, Helicase C-terminal 1 spans Leu731–Cys941. The region spanning Thr1006–Val1308 is the SEC63 1 domain. A Helicase ATP-binding 2 domain is found at Thr1360–Phe1537. Position 1373–1380 (Ala1373–Thr1380) interacts with ATP. A DELH box motif is present at residues Asp1479–His1482. The 206-residue stretch at Ala1574–Val1779 folds into the Helicase C-terminal 2 domain. In terms of domain architecture, SEC63 2 spans Pro1839 to Ser2157.

It belongs to the DExH box helicase family. Interacts with CLO.

It is found in the nucleus. It catalyses the reaction ATP + H2O = ADP + phosphate + H(+). In terms of biological role, RNA helicase that plays an essential role in pre-mRNA splicing as component of the U5 snRNP and U4/U6-U5 tri-snRNP complexes. Involved in spliceosome assembly, activation and disassembly. This Arabidopsis thaliana (Mouse-ear cress) protein is DExH-box ATP-dependent RNA helicase DExH12.